The primary structure comprises 1499 residues: Rho GTPase-activating protein 35 (1499 aa).

A has GTPase activity, required for proper localization region spans residues 1-266 (MMMARKQDVR…IPYFEALKQQ (266 aa)). GTP-binding positions include Lys28, 33–37 (IGKSC), Leu52, Ser56, 95–97 (EQT), 201–203 (KCD), and 229–231 (SAR). FF domains are found at residues 270-327 (IATA…HIHR), 368-422 (KLLE…HLEK), 429-483 (RAEM…HQKQ), and 485-550 (IDRA…HIHF). The residue at position 308 (Tyr308) is a Phosphotyrosine. Ser589 bears the Phosphoserine mark. Positions 592 to 767 (DPNIDRINLV…LLDSKRNLNL (176 aa)) constitute a pG1 pseudoGTPase domain. 2 positions are modified to phosphoserine: Ser770 and Ser773. Residues 783-947 (RIVMCLMCGD…FKDVVEKKNI (165 aa)) enclose the pG2 pseudoGTPase domain. Ser970, Ser975, Ser985, and Ser1072 each carry phosphoserine. Phosphotyrosine is present on Tyr1087. Residue Tyr1105 is modified to Phosphotyrosine; by ABL2 and PTK6. Polar residues predominate over residues 1124–1141 (KAQSNGSGNGSDSEMDTS). A disordered region spans residues 1124 to 1148 (KAQSNGSGNGSDSEMDTSSLERGRK). A phosphoserine mark is found at Ser1134, Ser1142, Ser1150, Ser1176, Ser1179, and Ser1221. The tract at residues 1177 to 1207 (VGSDDELGPIRKKEEDQASQGYKGDNAVIPY) is disordered. The tract at residues 1213–1236 (PRRRNILRSLRRNTKKPKPKPRPS) is required for phospholipid binding and regulation of the substrate preference. Phosphothreonine is present on Thr1226. Ser1236 is subject to Phosphoserine. One can recognise a Rho-GAP domain in the interval 1249-1436 (VPLTTVVTPE…LFIQQCPFFF (188 aa)). The tract at residues 1446–1499 (GAAPGSPSAMAPTVPFLTSTPATSQPSPPQSPPPTPQSPMQPLLSSQLQAEHTL) is disordered. Over residues 1448–1470 (APGSPSAMAPTVPFLTSTPATSQ) the composition is skewed to low complexity. The segment covering 1471–1484 (PSPPQSPPPTPQSP) has biased composition (pro residues). Phosphoserine occurs at positions 1472 and 1476. Thr1480 is subject to Phosphothreonine. A Phosphoserine modification is found at Ser1483. Residues 1485 to 1499 (MQPLLSSQLQAEHTL) show a composition bias toward low complexity.

In terms of assembly, interacts with RASA1. Interacts with the general transcription factor GTF2I, the interaction sequesters GTF2I in the cytoplasm. Post-translationally, phosphorylation of Tyr-1105 by PTK6 promotes the association with RASA1, inactivating RHOA while activating RAS. Phosphorylation at Tyr-308 by PDGFRA inhibits binding to GTF2I. Phosphorylated by PRKCA at Ser-1221 and Thr-1226, induces relocalization from the cytoplasm to regions of plasma membrane ruffling and prevents the binding and substrate specificity regulation by phospholipids. In brain, phosphorylated by FYN and SRC. During focal adhesion formation, phosphorylated by MAPK1 and MAPK3 at the C-terminal region, probably at Ser-1451, Ser-1476, Thr-1480 and Ser-1483. Phosphorylation by MAPK1 and MAPK3 inhibits GAP function and localizes ARGHAP35 away from newly forming focal adhesions and stress fibers in cells spreading on fibronectin. Phosphorylation at Ser-1476 and Thr-1480 by GSK3B requires priming by MAPK and inhibits RhoGAP activity and modulates polarized cell migration. In terms of tissue distribution, ubiquitously expressed.

It localises to the cytoplasm. Its subcellular location is the cytoskeleton. The protein resides in the cilium basal body. The protein localises to the nucleus. It is found in the cell membrane. Its function is as follows. Rho GTPase-activating protein (GAP). Binds several acidic phospholipids which inhibits the Rho GAP activity to promote the Rac GAP activity. This binding is inhibited by phosphorylation by PRKCA. Involved in cell differentiation as well as cell adhesion and migration, plays an important role in retinal tissue morphogenesis, neural tube fusion, midline fusion of the cerebral hemispheres and mammary gland branching morphogenesis. Transduces signals from p21-ras to the nucleus, acting via the ras GTPase-activating protein (GAP). Transduces SRC-dependent signals from cell-surface adhesion molecules, such as laminin, to promote neurite outgrowth. Regulates axon outgrowth, guidance and fasciculation. Modulates Rho GTPase-dependent F-actin polymerization, organization and assembly, is involved in polarized cell migration and in the positive regulation of ciliogenesis and cilia elongation. During mammary gland development, is required in both the epithelial and stromal compartments for ductal outgrowth. Represses transcription of the glucocorticoid receptor by binding to the cis-acting regulatory sequence 5'-GAGAAAAGAAACTGGAGAAACTC-3'; this function is however unclear and would need additional experimental evidences. The protein is Rho GTPase-activating protein 35 of Rattus norvegicus (Rat).